A 251-amino-acid chain; its full sequence is HTH-type transcriptional regulator UlaR (251 aa).

The 56-residue stretch at 3–58 (EAQRHQILLEMLAQLGFVTVEKVVERLGISPATARRDINKLDESGKLKKVRNGAEA) folds into the HTH deoR-type domain. A DNA-binding region (H-T-H motif) is located at residues 20–39 (VTVEKVVERLGISPATARRD).

It is found in the cytoplasm. Functionally, represses ulaG and the ulaABCDEF operon. This chain is HTH-type transcriptional regulator UlaR, found in Escherichia coli O127:H6 (strain E2348/69 / EPEC).